A 441-amino-acid chain; its full sequence is Serine carboxypeptidase-like 4 (441 aa).

The N-terminal stretch at 1 to 29 (MANNNVYSVLKSLLLLLHLVFLSKQHVDS) is a signal peptide. 3 disulfides stabilise this stretch: Cys-88–Cys-331, Cys-252–Cys-266, and Cys-290–Cys-297. Residue Asn-109 is glycosylated (N-linked (GlcNAc...) asparagine). Residue Ser-184 is part of the active site. Residue Asn-350 is glycosylated (N-linked (GlcNAc...) asparagine). Asp-366 is a catalytic residue. An N-linked (GlcNAc...) asparagine glycan is attached at Asn-382. The active site involves His-419.

Belongs to the peptidase S10 family. As to expression, ubiquitous.

Its subcellular location is the secreted. Probable carboxypeptidase. The chain is Serine carboxypeptidase-like 4 (SCPL4) from Arabidopsis thaliana (Mouse-ear cress).